A 338-amino-acid polypeptide reads, in one-letter code: Legumin B (338 aa).

Residues 16 to 162 (SLNTKEDTAK…RQHSKGRKNG (147 aa)) form a disordered region. Basic and acidic residues predominate over residues 18–44 (NTKEDTAKRLRSPQDERGQIVKVEDGL). Acidic residues-rich tracts occupy residues 82–92 (DEDEDEEEEEE) and 136–150 (EEEE…EEEE). The Cupin type-1 domain occupies 174 to 321 (ENIARPSRGD…AFGLRHSQVA (148 aa)).

It belongs to the 11S seed storage protein (globulins) family. As to quaternary structure, hexamer; each subunit is composed of an acidic and a basic chain derived from a single precursor and linked by a disulfide bond.

Its function is as follows. This protein found in the seeds of many leguminous and non-leguminous plants is the source of sulfur-containing amino acids in seed meals. The protein is Legumin B (LEGB) of Pisum sativum (Garden pea).